A 325-amino-acid chain; its full sequence is MIARIWSGESPLWRLLLPFSWLYGLVSGAIRLSYKLGLKRAWRAPVPVVVVGNLTAGGNGKTPVVIWLVEQLQRRGVRVGVVSRGYGGKAVAYPLLLTPETTTAEAGDEPVLIYQRTGAPVAVAPERAAAVKAILAAHDVQIIITDDGLQHYRLARDIEIVVIDGVRRFGNGWWLPAGPMRERASRLKTVDAAIVNGGVARAGEIPMQLAPGLAVNLRTGARCDVAQLSNIVAMAGIGHPPRFFATLESCGAHPQKCVPLADHQTLAPADVQALVGEGQTLVMTEKDAVKCRAFAEDNWWFLPVDARLSGEKPDKLLEHITSLVR.

55–62 (TAGGNGKT) contacts ATP.

It belongs to the LpxK family.

The enzyme catalyses a lipid A disaccharide + ATP = a lipid IVA + ADP + H(+). The protein operates within glycolipid biosynthesis; lipid IV(A) biosynthesis; lipid IV(A) from (3R)-3-hydroxytetradecanoyl-[acyl-carrier-protein] and UDP-N-acetyl-alpha-D-glucosamine: step 6/6. In terms of biological role, transfers the gamma-phosphate of ATP to the 4'-position of a tetraacyldisaccharide 1-phosphate intermediate (termed DS-1-P) to form tetraacyldisaccharide 1,4'-bis-phosphate (lipid IVA). The sequence is that of Tetraacyldisaccharide 4'-kinase from Salmonella arizonae (strain ATCC BAA-731 / CDC346-86 / RSK2980).